Consider the following 136-residue polypeptide: Histone H3 (136 aa).

This sequence belongs to the histone H3 family. The nucleosome is a histone octamer containing two molecules each of H2A, H2B, H3 and H4 assembled in one H3-H4 heterotetramer and two H2A-H2B heterodimers. The octamer wraps approximately 147 bp of DNA.

Its subcellular location is the nucleomorph. It is found in the chromosome. In terms of biological role, core component of nucleosome. Nucleosomes wrap and compact DNA into chromatin, limiting DNA accessibility to the cellular machineries which require DNA as a template. Histones thereby play a central role in transcription regulation, DNA repair, DNA replication and chromosomal stability. DNA accessibility is regulated via a complex set of post-translational modifications of histones, also called histone code, and nucleosome remodeling. This Guillardia theta (Cryptophyte) protein is Histone H3.